A 212-amino-acid chain; its full sequence is Large ribosomal subunit protein uL1 (212 aa).

It belongs to the universal ribosomal protein uL1 family. In terms of assembly, part of the 50S ribosomal subunit.

Functionally, binds directly to 23S rRNA. Probably involved in E site tRNA release. In terms of biological role, protein L1 is also a translational repressor protein, it controls the translation of its operon by binding to its mRNA. The sequence is that of Large ribosomal subunit protein uL1 from Haloquadratum walsbyi (strain DSM 16790 / HBSQ001).